The sequence spans 612 residues: Indole-3-acetic acid-amido synthetase GH3.6 (612 aa).

Belongs to the IAA-amido conjugating enzyme family. Expressed in cotyledons, stipules, true leaves, hypocotyls, and all parts of the roots. Not detected in flowers.

Catalyzes the synthesis of indole-3-acetic acid (IAA)-amino acid conjugates, providing a mechanism for the plant to cope with the presence of excess auxin. Strongly reactive with Glu, Gln, Trp, Asp, Ala, Leu, Phe, Gly, Tyr, Met, Ile and Val. Little or no product formation with His, Ser, Thr, Arg, Lys, or Cys. Also active on pyruvic and butyric acid analogs of IAA, PAA and the synthetic auxin naphthaleneacetic acid (NAA). The two chlorinated synthetic auxin herbicides 2,4-D and 3,6-dichloro-o-anisic acid (dicamba) cannot be used as substrates. Involved in auxin signal transduction. Inhibits shoot and hypocotyl cell elongation, and lateral root cell differentiation in light. The chain is Indole-3-acetic acid-amido synthetase GH3.6 (GH3.6) from Arabidopsis thaliana (Mouse-ear cress).